Here is a 122-residue protein sequence, read N- to C-terminus: MIQMQTNLDVADNSGARRVMCIKVLGGSKRKYASVGDIIVVSVKEAIPRGRVKKGDVMKAVVVRTAKDIRRPDGSVIRFDSNAAVLVDNKREPIGTRIFGPVPRELRAKNHMKIISLAPEVL.

This sequence belongs to the universal ribosomal protein uL14 family. Part of the 50S ribosomal subunit. Forms a cluster with proteins L3 and L19. In the 70S ribosome, L14 and L19 interact and together make contacts with the 16S rRNA in bridges B5 and B8.

Binds to 23S rRNA. Forms part of two intersubunit bridges in the 70S ribosome. This Chelativorans sp. (strain BNC1) protein is Large ribosomal subunit protein uL14.